The chain runs to 2611 residues: Highly reducing polyketide synthase ATEG_07659 (2611 aa).

The Ketosynthase family 3 (KS3) domain occupies 10–409 (SEPIAIIGLS…GTNSHVIVEG (400 aa)). Residues Cys-157, His-292, and His-330 each act as for beta-ketoacyl synthase activity in the active site. Positions 537 to 844 (MVFTGQGAQW…VRFVEAFTDM (308 aa)) are malonyl-CoA:ACP transacylase (MAT) domain. Positions 969–1109 (HDLLGVLVPG…GLITVQMAAD (141 aa)) are N-terminal hotdog fold. The PKS/mFAS DH domain occupies 969 to 1292 (HDLLGVLVPG…CQSLGRSAPG (324 aa)). The segment at 970-1289 (DLLGVLVPGT…GLVCQSLGRS (320 aa)) is dehydratase (DH) domain. Catalysis depends on His-1001, which acts as the Proton acceptor; for dehydratase activity. The C-terminal hotdog fold stretch occupies residues 1128–1292 (GYTRRIDPQD…CQSLGRSAPG (165 aa)). Catalysis depends on Asp-1199, which acts as the Proton donor; for dehydratase activity. Positions 1469–1602 (FGQLKSLLAA…GATLLLMETT (134 aa)) are methyltransferase (CMet) domain. The tract at residues 1898–2213 (GLLDTLAFGD…TGKHLGKLVL (316 aa)) is enoyl reductase (ER) domain. The ketoreductase (KR) domain stretch occupies residues 2236-2416 (ASYLLVGGVG…AVSLDMGVIK (181 aa)). Residues 2499-2509 (SRAQAQQAGGD) show a composition bias toward low complexity. The segment at 2499–2520 (SRAQAQQAGGDSDSEPLSAKLR) is disordered. In terms of domain architecture, Carrier spans 2527–2604 (AAARCVGDAI…ALALDVVAKS (78 aa)). Residue Ser-2564 is modified to O-(pantetheine 4'-phosphoryl)serine.

It participates in secondary metabolite biosynthesis. In terms of biological role, highly reducing polyketide synthase; part of the cluster B that mediates the biosynthesis of azasperpyranones, members of the azaphilone family that exhibit anti-cancer activities. Azasperpyranones are synthesized by 2 clusters, A and B. Cluster A is responsible for the production of the polyhydric phenol moiety while the azaphilonoid scaffold is produced by the cluster B. The non-reducing polyketide synthase ATEG_03629 produces 5-methyl orsellinic acid, which is then reduced to 5-methyl orsellinic aldehyde by the NRPS-like protein ATEG_03630. 5-methyl orsellinic aldehyde is then first hydroxylated by the FAD-dependent monooxygenase ATEG_03635 and subsequently hydroxylated by the cytochrome P450 monooxygenase ATEG_03631 to produce the unstable polyhydric phenol precursor of azasperpyranones. On the other hand, the polyketide synthase ATEG_07659 is responsible for producing the 3,5-dimethyloctadienone moiety from acetyl-CoA, three malonyl-CoA, and two S-adenosyl methionines (SAM). The 3,5-dimethyloctadienone moiety is then loaded onto the SAT domain of ATEG_07661 and extended with four malonyl-CoA and one SAM, which leads to the formation of 2,4-dihydroxy-6-(5,7-dimethyl-2-oxo-trans-3-trans-5-nonadienyl)-3-methylbenzaldehyde (compound 8) after reductive release and aldol condensation. The FAD-dependent monooxygenase ATEG_07662 is the next enzyme in the biosynthesis sequence and hydroxylates the side chain at the benzylic position of compound 8. In Aspergillus nidulans, afoF, the ortholog of the FAD-dependent oxygenase ATEG_07660, is the key enzyme for the biosynthesis of asperfuranone by catalyzing the hydroxylation at C-8 of to prevent the formation of a six-membered ring hemiacetal intermediate and thus facilitating the formation of a five-membered ring to produce asperfuranone. In Aspergillus terreus, ATEG_07660 is probably not functional, which leads to the formation of the six-membered ring hemiacetal intermediate presperpyranone instead of asperfuranone. Finally, ATEG_03636 is involved in the condensation of the polyhydric phenol moiety produced by cluster A and the perasperpyranone precursor produced by cluster B, to yield azasperpyranone A. Further modifications of azasperpyranone A result in the production of derivatives, including azasperpyranone B to F. This Aspergillus terreus (strain NIH 2624 / FGSC A1156) protein is Highly reducing polyketide synthase ATEG_07659.